A 396-amino-acid chain; its full sequence is Probable glucan endo-1,6-beta-glucosidase B (396 aa).

An N-terminal signal peptide occupies residues 1–17 (MIRRLAAFSALSGLATA). An N-linked (GlcNAc...) asparagine glycan is attached at Asn30. Glu219 serves as the catalytic Proton donor. Asn272 is a glycosylation site (N-linked (GlcNAc...) asparagine). The Nucleophile role is filled by Glu320.

It belongs to the glycosyl hydrolase 5 (cellulase A) family.

It localises to the secreted. The catalysed reaction is Random hydrolysis of (1-&gt;6)-linkages in (1-&gt;6)-beta-D-glucans.. In terms of biological role, beta-glucanases participate in the metabolism of beta-glucan, the main structural component of the cell wall. Acts on lutean, pustulan and 1,6-oligo-beta-D-glucosides. The sequence is that of Probable glucan endo-1,6-beta-glucosidase B (exgB) from Aspergillus fumigatus (strain ATCC MYA-4609 / CBS 101355 / FGSC A1100 / Af293) (Neosartorya fumigata).